Reading from the N-terminus, the 863-residue chain is Major vault protein (863 aa).

MVP repeat units lie at residues 2-60 (DADH…VPPR), 61-115 (HYCV…DVTP), 116-168 (LQIV…EVIK), 169-221 (ATVI…DIVS), 222-276 (AFIL…GVVD), 277-327 (VTTL…IQDV), 328-396 (YVLS…TRTA), 397-471 (IPLD…KTRV), and 472-534 (VSYR…LLGP). The disordered stretch occupies residues 349-368 (GDEAEEEERESRAKKRGVQR). The IQ domain occupies 677–706 (ARHEAERLEQEARGRLERQKITDQAEAEKA).

The vault ribonucleoprotein particle is a huge (400 A x 670 A) cage structure of 12.9 MDa. It consists of a dimer of half-vaults, with each half-vault comprising 39 identical major vault protein (MVP) chains, PARP4 and one or more vault RNAs (vRNAs).

The protein resides in the cytoplasm. It localises to the nucleus. Required for normal vault structure. Vaults are multi-subunit structures that may act as scaffolds for proteins involved in signal transduction. Vaults may also play a role in nucleo-cytoplasmic transport. The polypeptide is Major vault protein (mvp) (Danio rerio (Zebrafish)).